A 193-amino-acid polypeptide reads, in one-letter code: NAD(P)H-quinone oxidoreductase subunit I (193 aa).

4Fe-4S ferredoxin-type domains lie at 55–84 (GRIHFEFDKCISCEVCVRVCPINLPVVDWE) and 95–124 (KHYSIDFGVCIFCANCVEYCPTNCLSVTEE). 8 residues coordinate [4Fe-4S] cluster: Cys64, Cys67, Cys70, Cys74, Cys104, Cys107, Cys110, and Cys114.

It belongs to the complex I 23 kDa subunit family. NDH-1 is composed of at least 11 different subunits. It depends on [4Fe-4S] cluster as a cofactor.

It is found in the cellular thylakoid membrane. The catalysed reaction is a plastoquinone + NADH + (n+1) H(+)(in) = a plastoquinol + NAD(+) + n H(+)(out). It carries out the reaction a plastoquinone + NADPH + (n+1) H(+)(in) = a plastoquinol + NADP(+) + n H(+)(out). NDH-1 shuttles electrons from an unknown electron donor, via FMN and iron-sulfur (Fe-S) centers, to quinones in the respiratory and/or the photosynthetic chain. The immediate electron acceptor for the enzyme in this species is believed to be plastoquinone. Couples the redox reaction to proton translocation, and thus conserves the redox energy in a proton gradient. This chain is NAD(P)H-quinone oxidoreductase subunit I, found in Cyanothece sp. (strain PCC 7425 / ATCC 29141).